The sequence spans 300 residues: Ribosomal protein L11 methyltransferase (300 aa).

S-adenosyl-L-methionine is bound by residues Thr-152, Gly-173, Asp-195, and Asn-234.

The protein belongs to the methyltransferase superfamily. PrmA family.

It localises to the cytoplasm. The catalysed reaction is L-lysyl-[protein] + 3 S-adenosyl-L-methionine = N(6),N(6),N(6)-trimethyl-L-lysyl-[protein] + 3 S-adenosyl-L-homocysteine + 3 H(+). Methylates ribosomal protein L11. The polypeptide is Ribosomal protein L11 methyltransferase (Burkholderia lata (strain ATCC 17760 / DSM 23089 / LMG 22485 / NCIMB 9086 / R18194 / 383)).